The chain runs to 269 residues: UPF0761 membrane protein NTHI0384 (269 aa).

The next 6 membrane-spanning stretches (helical) occupy residues 32–52 (MLAI…FPVF), 89–109 (MSAV…NNID), 128–148 (FAIY…SIGI), 168–188 (LLSF…YTVV), 203–223 (FLAA…VVTF), and 232–252 (AMAT…VVLV).

The protein belongs to the UPF0761 family.

It is found in the cell inner membrane. This chain is UPF0761 membrane protein NTHI0384, found in Haemophilus influenzae (strain 86-028NP).